A 295-amino-acid chain; its full sequence is Putative S-adenosyl-L-methionine-dependent methyltransferase Mvan_0910 (295 aa).

S-adenosyl-L-methionine-binding positions include D126 and 155-156 (DL).

The protein belongs to the UPF0677 family.

Functionally, exhibits S-adenosyl-L-methionine-dependent methyltransferase activity. This chain is Putative S-adenosyl-L-methionine-dependent methyltransferase Mvan_0910, found in Mycolicibacterium vanbaalenii (strain DSM 7251 / JCM 13017 / BCRC 16820 / KCTC 9966 / NRRL B-24157 / PYR-1) (Mycobacterium vanbaalenii).